Reading from the N-terminus, the 105-residue chain is ATP synthase subunit c (105 aa).

Helical transmembrane passes span 32–52 (SILGAMIGLGIAAFGGAIGMG) and 78–98 (VAMAMIEAQVIYTLVFAIIAI).

This sequence belongs to the ATPase C chain family. F-type ATPases have 2 components, F(1) - the catalytic core - and F(0) - the membrane proton channel. F(1) has five subunits: alpha(3), beta(3), gamma(1), delta(1), epsilon(1). F(0) has three main subunits: a(1), b(2) and c(10-14). The alpha and beta chains form an alternating ring which encloses part of the gamma chain. F(1) is attached to F(0) by a central stalk formed by the gamma and epsilon chains, while a peripheral stalk is formed by the delta and b chains.

Its subcellular location is the cell inner membrane. Its function is as follows. F(1)F(0) ATP synthase produces ATP from ADP in the presence of a proton or sodium gradient. F-type ATPases consist of two structural domains, F(1) containing the extramembraneous catalytic core and F(0) containing the membrane proton channel, linked together by a central stalk and a peripheral stalk. During catalysis, ATP synthesis in the catalytic domain of F(1) is coupled via a rotary mechanism of the central stalk subunits to proton translocation. Key component of the F(0) channel; it plays a direct role in translocation across the membrane. A homomeric c-ring of between 10-14 subunits forms the central stalk rotor element with the F(1) delta and epsilon subunits. This Helicobacter pylori (strain ATCC 700392 / 26695) (Campylobacter pylori) protein is ATP synthase subunit c.